A 144-amino-acid polypeptide reads, in one-letter code: MAGKFSFSNFFGMTEDEDYSTDLQGTKTTDEVSPTSRPDNIISMTAAGNAKMNKIVLCEPRIYSDAKKVGKHLLENKAVIVNFTRIEGAQASRIIDFLTGTVFAINGEIQRVGEQIFLCTPPNYEIDGNLSDIIDQNDFDSEVN.

The segment covering 21–38 (TDLQGTKTTDEVSPTSRP) has biased composition (polar residues). Positions 21 to 40 (TDLQGTKTTDEVSPTSRPDN) are disordered.

The protein belongs to the SepF family. As to quaternary structure, homodimer. Interacts with FtsZ.

The protein localises to the cytoplasm. In terms of biological role, cell division protein that is part of the divisome complex and is recruited early to the Z-ring. Probably stimulates Z-ring formation, perhaps through the cross-linking of FtsZ protofilaments. Its function overlaps with FtsA. In Latilactobacillus sakei subsp. sakei (strain 23K) (Lactobacillus sakei subsp. sakei), this protein is Cell division protein SepF.